Consider the following 255-residue polypeptide: 4-diphosphocytidyl-2-C-methyl-D-erythritol kinase (255 aa).

Residue lysine 6 is part of the active site. Position 95-105 (95-105) interacts with ATP; that stretch reads PVCAGLGGGSS. The active site involves aspartate 137.

This sequence belongs to the GHMP kinase family. IspE subfamily.

The enzyme catalyses 4-CDP-2-C-methyl-D-erythritol + ATP = 4-CDP-2-C-methyl-D-erythritol 2-phosphate + ADP + H(+). Its pathway is isoprenoid biosynthesis; isopentenyl diphosphate biosynthesis via DXP pathway; isopentenyl diphosphate from 1-deoxy-D-xylulose 5-phosphate: step 3/6. Catalyzes the phosphorylation of the position 2 hydroxy group of 4-diphosphocytidyl-2C-methyl-D-erythritol. In Campylobacter jejuni subsp. jejuni serotype O:6 (strain 81116 / NCTC 11828), this protein is 4-diphosphocytidyl-2-C-methyl-D-erythritol kinase.